A 283-amino-acid polypeptide reads, in one-letter code: Light-independent protochlorophyllide reductase iron-sulfur ATP-binding protein (283 aa).

ATP contacts are provided by residues 15–20 (GIGKST) and K44. S19 lines the Mg(2+) pocket. C100 and C134 together coordinate [4Fe-4S] cluster. 185-186 (NR) is a binding site for ATP.

The protein belongs to the NifH/BchL/ChlL family. In terms of assembly, homodimer. Protochlorophyllide reductase is composed of three subunits; ChlL, ChlN and ChlB. It depends on [4Fe-4S] cluster as a cofactor.

It catalyses the reaction chlorophyllide a + oxidized 2[4Fe-4S]-[ferredoxin] + 2 ADP + 2 phosphate = protochlorophyllide a + reduced 2[4Fe-4S]-[ferredoxin] + 2 ATP + 2 H2O. Its pathway is porphyrin-containing compound metabolism; chlorophyll biosynthesis (light-independent). Functionally, component of the dark-operative protochlorophyllide reductase (DPOR) that uses Mg-ATP and reduced ferredoxin to reduce ring D of protochlorophyllide (Pchlide) to form chlorophyllide a (Chlide). This reaction is light-independent. The L component serves as a unique electron donor to the NB-component of the complex, and binds Mg-ATP. The sequence is that of Light-independent protochlorophyllide reductase iron-sulfur ATP-binding protein from Synechococcus sp. (strain JA-2-3B'a(2-13)) (Cyanobacteria bacterium Yellowstone B-Prime).